Reading from the N-terminus, the 200-residue chain is Adenylate kinase (200 aa).

11 to 16 (GAGKGT) is a binding site for ATP. The tract at residues 31–60 (STGDIFRQNIKDRTELGQQVQALVDAGNYV) is NMP. AMP-binding positions include Thr-32, Arg-37, 58–60 (NYV), 86–89 (GYPR), and Gln-93. An LID region spans residues 127–137 (RRAAEQGRADD). Residue Arg-128 participates in ATP binding. Residues Arg-134 and Arg-145 each contribute to the AMP site. Residue Gly-173 participates in ATP binding.

The protein belongs to the adenylate kinase family. Monomer.

Its subcellular location is the cytoplasm. The catalysed reaction is AMP + ATP = 2 ADP. The protein operates within purine metabolism; AMP biosynthesis via salvage pathway; AMP from ADP: step 1/1. Functionally, catalyzes the reversible transfer of the terminal phosphate group between ATP and AMP. Plays an important role in cellular energy homeostasis and in adenine nucleotide metabolism. The sequence is that of Adenylate kinase from Clavibacter michiganensis subsp. michiganensis (strain NCPPB 382).